The primary structure comprises 96 residues: Co-chaperonin GroES (96 aa).

The protein belongs to the GroES chaperonin family. As to quaternary structure, heptamer of 7 subunits arranged in a ring. Interacts with the chaperonin GroEL.

The protein resides in the cytoplasm. Its function is as follows. Together with the chaperonin GroEL, plays an essential role in assisting protein folding. The GroEL-GroES system forms a nano-cage that allows encapsulation of the non-native substrate proteins and provides a physical environment optimized to promote and accelerate protein folding. GroES binds to the apical surface of the GroEL ring, thereby capping the opening of the GroEL channel. The chain is Co-chaperonin GroES from Actinobacillus succinogenes (strain ATCC 55618 / DSM 22257 / CCUG 43843 / 130Z).